We begin with the raw amino-acid sequence, 602 residues long: Elongation factor 4 (602 aa).

Residues 7-189 form the tr-type G domain; that stretch reads KYIRNFSIVA…AIVNKVPAPD (183 aa). GTP-binding positions include 19 to 24 and 136 to 139; these read DHGKST and NKID.

This sequence belongs to the TRAFAC class translation factor GTPase superfamily. Classic translation factor GTPase family. LepA subfamily.

It localises to the cell membrane. It carries out the reaction GTP + H2O = GDP + phosphate + H(+). In terms of biological role, required for accurate and efficient protein synthesis under certain stress conditions. May act as a fidelity factor of the translation reaction, by catalyzing a one-codon backward translocation of tRNAs on improperly translocated ribosomes. Back-translocation proceeds from a post-translocation (POST) complex to a pre-translocation (PRE) complex, thus giving elongation factor G a second chance to translocate the tRNAs correctly. Binds to ribosomes in a GTP-dependent manner. The protein is Elongation factor 4 of Clostridium botulinum (strain Kyoto / Type A2).